The primary structure comprises 154 residues: MVLKVKMGDIGVAKSPESIETLLGSCVAIILYDRGKKIGGVAHVMLPKSRNSSEKNPGKYANTAIPELINRMAKLGARKDKLTTKLAGGAAMFKCNSNTIDVGKKNIEASREEVKKMGLRIASEDLGGDTGRTITLSLKDGSVLVRTGSELKTI.

This sequence belongs to the CheD family.

It catalyses the reaction L-glutaminyl-[protein] + H2O = L-glutamyl-[protein] + NH4(+). In terms of biological role, probably deamidates glutamine residues to glutamate on methyl-accepting chemotaxis receptors (MCPs), playing an important role in chemotaxis. This Methanococcus maripaludis (strain DSM 14266 / JCM 13030 / NBRC 101832 / S2 / LL) protein is Probable chemoreceptor glutamine deamidase CheD.